Reading from the N-terminus, the 1415-residue chain is Uveal autoantigen with coiled-coil domains and ankyrin repeats (1415 aa).

ANK repeat units follow at residues 69 to 98 (EGRS…DITT), 102 to 131 (AGRN…PTEH), 135 to 164 (QGRT…SVNA), 168 to 197 (DGRT…EINS), and 201 to 230 (QNRT…DVSL). A coiled-coil region spans residues 288-376 (VKSSQREHRN…TIESLKNRFK (89 aa)). An ANK 6 repeat occupies 617–646 (ELLAKLTLSVPTEKFESMKSLLSSEVNEKV). Positions 759–1381 (TVEELKKQLL…TDRQHQEVIA (623 aa)) form a coiled coil. Residue lysine 1034 forms a Glycyl lysine isopeptide (Lys-Gly) (interchain with G-Cter in SUMO2) linkage. Over residues 1186-1201 (LREKEEESQNKTEEVS) the composition is skewed to basic and acidic residues. Residues 1186 to 1205 (LREKEEESQNKTEEVSKLQS) are disordered.

In terms of assembly, component of the apoptosome complex, composed of APAF1, pro-caspase-9 and UACA. In the complex, it probably interacts directly with APAF1. Interacts with LGALS3, ARF6 and ACTB. Interacts with RAB39A. Highly expressed in adrenal, testis, kidney and large intestine.

It is found in the nucleus. The protein resides in the cytoplasm. The protein localises to the cytoskeleton. In terms of biological role, regulates APAF1 expression and plays an important role in the regulation of stress-induced apoptosis. Promotes apoptosis by regulating three pathways, apoptosome up-regulation, LGALS3/galectin-3 down-regulation and NF-kappa-B inactivation. Regulates the redistribution of APAF1 into the nucleus after proapoptotic stress. Down-regulates the expression of LGALS3 by inhibiting NFKB1. Modulates isoactin dynamics to regulate the morphological alterations required for cell growth and motility. Interaction with ARF6 may modulate cell shape and motility after injury. May be involved in multiple neurite formation. This Canis lupus familiaris (Dog) protein is Uveal autoantigen with coiled-coil domains and ankyrin repeats (UACA).